Consider the following 367-residue polypeptide: FAD synthetase 2, chloroplastic (367 aa).

A chloroplast-targeting transit peptide spans 1-57 (MLCGGSRVLQHLSDHNHHNSIGLGLGFCGAKIVQLSSFFLRPSQAMAKSHHFSRKLR).

Requires Mg(2+) as cofactor.

It is found in the plastid. The protein resides in the chloroplast. It catalyses the reaction FMN + ATP + H(+) = FAD + diphosphate. It participates in cofactor biosynthesis; FAD biosynthesis; FAD from FMN: step 1/1. Functionally, catalyzes the adenylation of flavin mononucleotide (FMN) to form flavin adenine dinucleotide (FAD) coenzyme. The sequence is that of FAD synthetase 2, chloroplastic from Arabidopsis thaliana (Mouse-ear cress).